The sequence spans 625 residues: Prothrombin (625 aa).

An N-terminal signal peptide occupies residues 1–24 (MARVRGPRLPGCLALAALFSLVHS). The propeptide occupies 25 to 43 (QHVFLAHQQASSLLQRARR). The Gla domain maps to 44 to 90 (ANKGFLEEVRKGNLERECLEEPCSREEAFEALESLSATDAFWAKYTA). 4-carboxyglutamate occurs at positions 50, 51, 58, 60, 63, 64, 69, 70, 73, and 76. C61 and C66 are joined by a disulfide. 11 disulfides stabilise this stretch: C91-C104, C109-C187, C130-C170, C158-C182, C214-C292, C235-C275, C263-C287, C339-C485, C394-C410, C539-C553, and C567-C597. Kringle domains follow at residues 109-187 (CAEG…VPVC) and 214-292 (CVPD…LNYC). N120 and N144 each carry an N-linked (GlcNAc...) asparagine glycan. Positions 367–621 (IVEGQDAEVG…LKKWIQKVID (255 aa)) constitute a Peptidase S1 domain. H409 serves as the catalytic Charge relay system. An N-linked (GlcNAc...) asparagine glycan is attached at N419. Catalysis depends on D465, which acts as the Charge relay system. The tract at residues 554–576 (AGYKPGEGKRGDACEGDSGGPFV) is high affinity receptor-binding region which is also known as the TP508 peptide. Catalysis depends on S571, which acts as the Charge relay system.

It belongs to the peptidase S1 family. In terms of assembly, heterodimer (named alpha-thrombin) of a light and a heavy chain; disulfide-linked. Forms a heterodimer with SERPINA5. In plasma, interacts (via N-terminus) with alpha-1-microglobulin; this interaction does not prevent the activation of prothrombin to thrombin. The gamma-carboxyglutamyl residues, which bind calcium ions, result from the carboxylation of glutamyl residues by a microsomal enzyme, the vitamin K-dependent carboxylase. The modified residues are necessary for the calcium-dependent interaction with a negatively charged phospholipid surface, which is essential for the conversion of prothrombin to thrombin. Post-translationally, in the penultimate step of the coagulation cascade, prothrombin is converted to thrombin by the prothrombinase complex composed of factor Xa (F10), cofactor Va (F5), and phospholipids. This activation requires factor Xa-catalyzed sequential cleavage at 2 sites, Arg-317 and Arg-366, along 2 possible pathways. In the first pathway, the first cleavage occurs at Arg-317, leading to the formation of the inactive intermediate prethrombin-2. This pathway preferentially occurs on platelets and in the absence of cofactor Va. In the second pathway, the first cleavage occurs at Arg-366, which separates protease domain into 2 chains that remain connected through a disulfide bond and generates the active intermediate meizothrombin. The presence of cofactor Va directs activation along the meizothrombin pathway and greatly accelerates the rate of cleavage at Arg-366, but has a smaller effect on the cleavage of meizothrombin at Arg-317. Meizothrombin accumulates as an intermediate when prothrombinase is assembled on the membrane of red blood cells. As to expression, expressed by the liver and secreted in plasma.

The protein localises to the secreted. It is found in the extracellular space. The enzyme catalyses Selective cleavage of Arg-|-Gly bonds in fibrinogen to form fibrin and release fibrinopeptides A and B.. With respect to regulation, activity is promoted in the presence of negatively charged surfaces, such as polyphosphate and dextran sulfate. Inhibited by SERPINA5. In terms of biological role, thrombin, which cleaves bonds after Arg and Lys, converts fibrinogen to fibrin and activates factors V, VII, VIII, XIII, and, in complex with thrombomodulin, protein C. Functions in blood homeostasis, inflammation and wound healing. Activates coagulation factor XI (F11); activation is promoted by the contact with negatively charged surfaces. Triggers the production of pro-inflammatory cytokines, such as MCP-1/CCL2 and IL8/CXCL8, in endothelial cells. The chain is Prothrombin (F2) from Bos taurus (Bovine).